The chain runs to 207 residues: Thymidylate kinase (207 aa).

The segment at 11–49 (EGIDGSGKSTQARRLAEHLRDTGRDPLLTREPGGSPGAE) is disordered. Residue 12–19 (GIDGSGKS) coordinates ATP. Residues 24–38 (RLAEHLRDTGRDPLL) are compositionally biased toward basic and acidic residues.

Belongs to the thymidylate kinase family.

It catalyses the reaction dTMP + ATP = dTDP + ADP. Functionally, phosphorylation of dTMP to form dTDP in both de novo and salvage pathways of dTTP synthesis. This chain is Thymidylate kinase, found in Dinoroseobacter shibae (strain DSM 16493 / NCIMB 14021 / DFL 12).